We begin with the raw amino-acid sequence, 153 residues long: Endoribonuclease YbeY (153 aa).

Zn(2+) contacts are provided by histidine 114, histidine 118, and histidine 124.

This sequence belongs to the endoribonuclease YbeY family. Requires Zn(2+) as cofactor.

It is found in the cytoplasm. In terms of biological role, single strand-specific metallo-endoribonuclease involved in late-stage 70S ribosome quality control and in maturation of the 3' terminus of the 16S rRNA. This is Endoribonuclease YbeY from Nitrosococcus oceani (strain ATCC 19707 / BCRC 17464 / JCM 30415 / NCIMB 11848 / C-107).